A 376-amino-acid polypeptide reads, in one-letter code: Erythronate-4-phosphate dehydrogenase (376 aa).

2 residues coordinate substrate: serine 45 and threonine 67. Aspartate 147 contacts NAD(+). Residue arginine 209 is part of the active site. An NAD(+)-binding site is contributed by aspartate 233. Residue glutamate 238 is part of the active site. The active-site Proton donor is histidine 255. An NAD(+)-binding site is contributed by glycine 258. Tyrosine 259 lines the substrate pocket.

The protein belongs to the D-isomer specific 2-hydroxyacid dehydrogenase family. PdxB subfamily. In terms of assembly, homodimer.

It localises to the cytoplasm. It carries out the reaction 4-phospho-D-erythronate + NAD(+) = (R)-3-hydroxy-2-oxo-4-phosphooxybutanoate + NADH + H(+). Its pathway is cofactor biosynthesis; pyridoxine 5'-phosphate biosynthesis; pyridoxine 5'-phosphate from D-erythrose 4-phosphate: step 2/5. Functionally, catalyzes the oxidation of erythronate-4-phosphate to 3-hydroxy-2-oxo-4-phosphonooxybutanoate. The sequence is that of Erythronate-4-phosphate dehydrogenase from Shewanella halifaxensis (strain HAW-EB4).